We begin with the raw amino-acid sequence, 222 residues long: Uracil-DNA glycosylase (222 aa).

D61 functions as the Proton acceptor in the catalytic mechanism.

This sequence belongs to the uracil-DNA glycosylase (UDG) superfamily. UNG family.

Its subcellular location is the cytoplasm. The enzyme catalyses Hydrolyzes single-stranded DNA or mismatched double-stranded DNA and polynucleotides, releasing free uracil.. In terms of biological role, excises uracil residues from the DNA which can arise as a result of misincorporation of dUMP residues by DNA polymerase or due to deamination of cytosine. The protein is Uracil-DNA glycosylase of Actinobacillus succinogenes (strain ATCC 55618 / DSM 22257 / CCUG 43843 / 130Z).